A 383-amino-acid chain; its full sequence is tRNA-specific 2-thiouridylase MnmA (383 aa).

Residues 30-37 (GMSGGVDS) and M56 each bind ATP. Positions 116–118 (NPD) are interaction with target base in tRNA. The active-site Nucleophile is the C121. A disulfide bridge connects residues C121 and C218. Residue G146 coordinates ATP. The segment at 168 to 170 (KDQ) is interaction with tRNA. C218 (cysteine persulfide intermediate) is an active-site residue. The interaction with tRNA stretch occupies residues 330–331 (RY).

This sequence belongs to the MnmA/TRMU family.

It is found in the cytoplasm. The catalysed reaction is S-sulfanyl-L-cysteinyl-[protein] + uridine(34) in tRNA + AH2 + ATP = 2-thiouridine(34) in tRNA + L-cysteinyl-[protein] + A + AMP + diphosphate + H(+). In terms of biological role, catalyzes the 2-thiolation of uridine at the wobble position (U34) of tRNA, leading to the formation of s(2)U34. This Haemophilus influenzae (strain ATCC 51907 / DSM 11121 / KW20 / Rd) protein is tRNA-specific 2-thiouridylase MnmA.